The sequence spans 126 residues: Large ribosomal subunit protein bL12 (126 aa).

The interval 97 to 126 is disordered; sequence PQPVKSGVSKEEAEEAKKQLAESGAEVEVK. Residues 104–116 show a composition bias toward basic and acidic residues; the sequence is VSKEEAEEAKKQL.

It belongs to the bacterial ribosomal protein bL12 family. In terms of assembly, homodimer. Part of the ribosomal stalk of the 50S ribosomal subunit. Forms a multimeric L10(L12)X complex, where L10 forms an elongated spine to which 2 to 4 L12 dimers bind in a sequential fashion. Binds GTP-bound translation factors.

Its function is as follows. Forms part of the ribosomal stalk which helps the ribosome interact with GTP-bound translation factors. Is thus essential for accurate translation. In Geotalea uraniireducens (strain Rf4) (Geobacter uraniireducens), this protein is Large ribosomal subunit protein bL12.